We begin with the raw amino-acid sequence, 158 residues long: Endoribonuclease YbeY (158 aa).

Residues His119, His123, and His129 each contribute to the Zn(2+) site.

Belongs to the endoribonuclease YbeY family. It depends on Zn(2+) as a cofactor.

The protein localises to the cytoplasm. Functionally, single strand-specific metallo-endoribonuclease involved in late-stage 70S ribosome quality control and in maturation of the 3' terminus of the 16S rRNA. The protein is Endoribonuclease YbeY of Acinetobacter baumannii (strain SDF).